Reading from the N-terminus, the 76-residue chain is DNA-directed RNA polymerase subunit epsilon (76 aa).

It belongs to the RNA polymerase subunit epsilon family. In terms of assembly, RNAP is composed of a core of 2 alpha, a beta and a beta' subunit. The core is associated with a delta subunit, and at least one of epsilon or omega. When a sigma factor is associated with the core the holoenzyme is formed, which can initiate transcription.

It catalyses the reaction RNA(n) + a ribonucleoside 5'-triphosphate = RNA(n+1) + diphosphate. A non-essential component of RNA polymerase (RNAP). The polypeptide is DNA-directed RNA polymerase subunit epsilon (Streptococcus gordonii (strain Challis / ATCC 35105 / BCRC 15272 / CH1 / DL1 / V288)).